The primary structure comprises 1012 residues: Cellulose synthase-like protein D5 (1012 aa).

The tract at residues 1–81 is disordered; that stretch reads MSVDYANYTV…ARVPAPSSNK (81 aa). Low complexity predominate over residues 20–37; the sequence is PSGGAPPAAPSAGGARPG. The segment covering 57 to 69 has biased composition (basic and acidic residues); that stretch reads GGGDDGAKMDRRL. 2 helical membrane-spanning segments follow: residues 150 to 170 and 180 to 200; these read ILSP…LFLV and ALWL…SWLL. Aspartate 280 is a catalytic residue. The segment at 597–620 is disordered; the sequence is PRQGSEAMPGAGGGRSGGGSVGGD. Residues 606–618 are compositionally biased toward gly residues; the sequence is GAGGGRSGGGSVG. The active site involves aspartate 717. The next 6 membrane-spanning stretches (helical) occupy residues 799-819, 825-845, 871-891, 914-934, 948-968, and 978-998; these read LFLI…QFIV, TFLS…LLEV, LAAV…SFTL, SLFI…VVGV, LLGG…FAKG, and TIVY…WITI.

It belongs to the glycosyltransferase 2 family. Plant cellulose synthase-like D subfamily.

The protein resides in the golgi apparatus membrane. Its function is as follows. Thought to be a Golgi-localized beta-glycan synthase that polymerize the backbones of noncellulosic polysaccharides (hemicelluloses) of plant cell wall. The sequence is that of Cellulose synthase-like protein D5 (CSLD5) from Oryza sativa subsp. japonica (Rice).